Consider the following 276-residue polypeptide: Secreted RxLR effector protein 150 (276 aa).

The signal sequence occupies residues 1 to 18 (MRNIAFLIGLFFIGYSSC). A RxLR-dEER motif is present at residues 49 to 64 (RTLQADDRERILAEER).

The protein belongs to the RxLR effector family.

Its subcellular location is the secreted. The protein localises to the host nucleus. The protein resides in the host cytoplasm. Functionally, secreted effector that partially suppresses the host cell death induced by cell death-inducing proteins. This chain is Secreted RxLR effector protein 150, found in Plasmopara viticola (Downy mildew of grapevine).